Here is a 508-residue protein sequence, read N- to C-terminus: Maturase K (508 aa).

This sequence belongs to the intron maturase 2 family. MatK subfamily.

It localises to the plastid. The protein localises to the chloroplast. Its function is as follows. Usually encoded in the trnK tRNA gene intron. Probably assists in splicing its own and other chloroplast group II introns. The chain is Maturase K from Abies bracteata (Bristle-cone fir).